Consider the following 415-residue polypeptide: Levansucrase (415 aa).

Sucrose is bound by residues Trp-45, Asp-46, Ala-132, Arg-202, and Asp-203. Asp-46 serves as the catalytic Nucleophile. The Proton donor/acceptor role is filled by Glu-287.

It belongs to the glycosyl hydrolase 68 family.

The protein localises to the secreted. The enzyme catalyses [6)-beta-D-fructofuranosyl-(2-&gt;](n) alpha-D-glucopyranoside + sucrose = [6)-beta-D-fructofuranosyl-(2-&gt;](n+1) alpha-D-glucopyranoside + D-glucose. Catalyzes the synthesis of levan, a fructose polymer, by transferring the fructosyl moiety from sucrose to a growing acceptor molecule. This is Levansucrase from Erwinia amylovora (Fire blight bacteria).